A 493-amino-acid chain; its full sequence is Glutamyl-tRNA(Gln) amidotransferase subunit A (493 aa).

Catalysis depends on charge relay system residues Lys79 and Ser159. The active-site Acyl-ester intermediate is the Ser183.

The protein belongs to the amidase family. GatA subfamily. In terms of assembly, heterotrimer of A, B and C subunits.

It carries out the reaction L-glutamyl-tRNA(Gln) + L-glutamine + ATP + H2O = L-glutaminyl-tRNA(Gln) + L-glutamate + ADP + phosphate + H(+). Functionally, allows the formation of correctly charged Gln-tRNA(Gln) through the transamidation of misacylated Glu-tRNA(Gln) in organisms which lack glutaminyl-tRNA synthetase. The reaction takes place in the presence of glutamine and ATP through an activated gamma-phospho-Glu-tRNA(Gln). The chain is Glutamyl-tRNA(Gln) amidotransferase subunit A from Brucella suis biovar 1 (strain 1330).